Reading from the N-terminus, the 91-residue chain is Small ribosomal subunit protein uS19 (91 aa).

The protein belongs to the universal ribosomal protein uS19 family.

Functionally, protein S19 forms a complex with S13 that binds strongly to the 16S ribosomal RNA. The protein is Small ribosomal subunit protein uS19 of Prochlorococcus marinus (strain SARG / CCMP1375 / SS120).